We begin with the raw amino-acid sequence, 412 residues long: Probable tRNA sulfurtransferase (412 aa).

The THUMP domain occupies 58–163 (DEVIKQLGYV…SEGTYIYVGK (106 aa)). ATP contacts are provided by residues 181 to 182 (ML), 206 to 207 (HF), Arg-265, Gly-287, and Gln-296.

The protein belongs to the ThiI family.

It localises to the cytoplasm. The catalysed reaction is [ThiI sulfur-carrier protein]-S-sulfanyl-L-cysteine + a uridine in tRNA + 2 reduced [2Fe-2S]-[ferredoxin] + ATP + H(+) = [ThiI sulfur-carrier protein]-L-cysteine + a 4-thiouridine in tRNA + 2 oxidized [2Fe-2S]-[ferredoxin] + AMP + diphosphate. It catalyses the reaction [ThiS sulfur-carrier protein]-C-terminal Gly-Gly-AMP + S-sulfanyl-L-cysteinyl-[cysteine desulfurase] + AH2 = [ThiS sulfur-carrier protein]-C-terminal-Gly-aminoethanethioate + L-cysteinyl-[cysteine desulfurase] + A + AMP + 2 H(+). Its pathway is cofactor biosynthesis; thiamine diphosphate biosynthesis. Functionally, catalyzes the ATP-dependent transfer of a sulfur to tRNA to produce 4-thiouridine in position 8 of tRNAs, which functions as a near-UV photosensor. Also catalyzes the transfer of sulfur to the sulfur carrier protein ThiS, forming ThiS-thiocarboxylate. This is a step in the synthesis of thiazole, in the thiamine biosynthesis pathway. The sulfur is donated as persulfide by IscS. In Acholeplasma laidlawii (strain PG-8A), this protein is Probable tRNA sulfurtransferase.